The chain runs to 334 residues: Adenosine deaminase (334 aa).

2 residues coordinate Zn(2+): His12 and His14. Residues His14, Asp16, and Gly170 each coordinate substrate. Residue His197 coordinates Zn(2+). Glu200 (proton donor) is an active-site residue. Asp278 is a binding site for Zn(2+). A substrate-binding site is contributed by Asp279.

Belongs to the metallo-dependent hydrolases superfamily. Adenosine and AMP deaminases family. Adenosine deaminase subfamily. Zn(2+) serves as cofactor.

It carries out the reaction adenosine + H2O + H(+) = inosine + NH4(+). It catalyses the reaction 2'-deoxyadenosine + H2O + H(+) = 2'-deoxyinosine + NH4(+). In terms of biological role, catalyzes the hydrolytic deamination of adenosine and 2-deoxyadenosine. This Yersinia pseudotuberculosis serotype O:1b (strain IP 31758) protein is Adenosine deaminase.